The chain runs to 439 residues: Elongation factor 1-alpha 2 (439 aa).

In terms of domain architecture, tr-type G spans 6–229; that stretch reads KDHLNLVVIG…DEFKVPKRPI (224 aa). The segment at 15-22 is G1; it reads GHVDSGKS. 15–22 is a GTP binding site; that stretch reads GHVDSGKS. A G2 region spans residues 71–75; the sequence is GITIN. The tract at residues 92 to 95 is G3; sequence DAPG. GTP is bound by residues 92 to 96 and 154 to 157; these read DAPGH and NKMD. Positions 154-157 are G4; that stretch reads NKMD. Positions 193–195 are G5; the sequence is SGF.

This sequence belongs to the TRAFAC class translation factor GTPase superfamily. Classic translation factor GTPase family. EF-Tu/EF-1A subfamily.

The protein resides in the cytoplasm. This protein promotes the GTP-dependent binding of aminoacyl-tRNA to the A-site of ribosomes during protein biosynthesis. The protein is Elongation factor 1-alpha 2 (EFA2) of Euplotes crassus.